Reading from the N-terminus, the 170-residue chain is RNA pyrophosphohydrolase (170 aa).

Residues 8–151 (PYRPNVGIAL…KKALYAELIP (144 aa)) form the Nudix hydrolase domain. The Nudix box motif lies at 42 to 63 (GGIDEGETPQVAALREMGEEIG).

The protein belongs to the Nudix hydrolase family. RppH subfamily. The cofactor is a divalent metal cation.

In terms of biological role, accelerates the degradation of transcripts by removing pyrophosphate from the 5'-end of triphosphorylated RNA, leading to a more labile monophosphorylated state that can stimulate subsequent ribonuclease cleavage. This Gluconobacter oxydans (strain 621H) (Gluconobacter suboxydans) protein is RNA pyrophosphohydrolase.